A 172-amino-acid polypeptide reads, in one-letter code: Large ribosomal subunit protein bL17 (172 aa).

The tract at residues Ala123–Lys172 is disordered. Over residues Glu132–Ala143 the composition is skewed to low complexity.

It belongs to the bacterial ribosomal protein bL17 family. In terms of assembly, part of the 50S ribosomal subunit. Contacts protein L32.

This chain is Large ribosomal subunit protein bL17, found in Thermobifida fusca (strain YX).